The primary structure comprises 156 residues: Small ribosomal subunit protein uS7 (156 aa).

This sequence belongs to the universal ribosomal protein uS7 family. As to quaternary structure, part of the 30S ribosomal subunit. Contacts proteins S9 and S11.

One of the primary rRNA binding proteins, it binds directly to 16S rRNA where it nucleates assembly of the head domain of the 30S subunit. Is located at the subunit interface close to the decoding center, probably blocks exit of the E-site tRNA. The sequence is that of Small ribosomal subunit protein uS7 from Phytoplasma mali (strain AT).